We begin with the raw amino-acid sequence, 714 residues long: Fatty acid oxidation complex subunit alpha (714 aa).

The segment at 1-190 (MEMASAFTLN…KLGLVDDVVP (190 aa)) is enoyl-CoA hydratase. The interval 306 to 714 (APLNSVGILG…FWKTTATDLQ (409 aa)) is 3-hydroxyacyl-CoA dehydrogenase.

The protein in the N-terminal section; belongs to the enoyl-CoA hydratase/isomerase family. In the central section; belongs to the 3-hydroxyacyl-CoA dehydrogenase family. In terms of assembly, heterotetramer of two alpha chains (FadJ) and two beta chains (FadI).

The protein resides in the cytoplasm. It carries out the reaction a (3S)-3-hydroxyacyl-CoA = a (2E)-enoyl-CoA + H2O. It catalyses the reaction a 4-saturated-(3S)-3-hydroxyacyl-CoA = a (3E)-enoyl-CoA + H2O. The enzyme catalyses a (3S)-3-hydroxyacyl-CoA + NAD(+) = a 3-oxoacyl-CoA + NADH + H(+). The catalysed reaction is (3S)-3-hydroxybutanoyl-CoA = (3R)-3-hydroxybutanoyl-CoA. It participates in lipid metabolism; fatty acid beta-oxidation. Its function is as follows. Catalyzes the formation of a hydroxyacyl-CoA by addition of water on enoyl-CoA. Also exhibits 3-hydroxyacyl-CoA epimerase and 3-hydroxyacyl-CoA dehydrogenase activities. The chain is Fatty acid oxidation complex subunit alpha from Escherichia coli O81 (strain ED1a).